We begin with the raw amino-acid sequence, 72 residues long: uncharacterized protein (72 aa).

A helical transmembrane segment spans residues 33 to 53 (VCIFFSLIFFFFFFFFCVNWG).

Its subcellular location is the membrane. This is an uncharacterized protein from Dictyostelium discoideum (Social amoeba).